Here is a 366-residue protein sequence, read N- to C-terminus: Histidinol-phosphate aminotransferase 2 (366 aa).

K226 carries the post-translational modification N6-(pyridoxal phosphate)lysine.

It belongs to the class-II pyridoxal-phosphate-dependent aminotransferase family. Histidinol-phosphate aminotransferase subfamily. In terms of assembly, homodimer. It depends on pyridoxal 5'-phosphate as a cofactor.

It carries out the reaction L-histidinol phosphate + 2-oxoglutarate = 3-(imidazol-4-yl)-2-oxopropyl phosphate + L-glutamate. It functions in the pathway amino-acid biosynthesis; L-histidine biosynthesis; L-histidine from 5-phospho-alpha-D-ribose 1-diphosphate: step 7/9. In Haemophilus influenzae (strain 86-028NP), this protein is Histidinol-phosphate aminotransferase 2.